The chain runs to 174 residues: Protein MOTHER of FT and TFL1 homolog 2 (174 aa).

This sequence belongs to the phosphatidylethanolamine-binding protein family.

In terms of biological role, may form complexes with phosphorylated ligands by interfering with kinases and their effectors. This is Protein MOTHER of FT and TFL1 homolog 2 from Oryza sativa subsp. japonica (Rice).